The primary structure comprises 673 residues: Inactive polyglycylase TTLL10 (673 aa).

The tract at residues 1 to 132 (MDHSCTRFIH…ADSDDTNAAG (132 aa)) is disordered. The span at 8–36 (FIHRRGPPTRTRAGFKRGKRPRIQQRPRA) shows a compositional bias: basic residues. The span at 52–62 (ASQPGPCPAPG) shows a compositional bias: pro residues. Residues 89–105 (PDHDADGHCGPDLEGAE) are compositionally biased toward basic and acidic residues. The TTL domain maps to 155 to 552 (PGPFFYIGGS…TFRKSLRGQK (398 aa)). ATP-binding positions include 362–365 (QRYI), Lys-375, and Asp-377. Residues 569-673 (EADPRPHLGG…EREEPENARP (105 aa)) are disordered. The segment covering 612 to 627 (PAPPPLVPQRPRPPGP) has biased composition (pro residues). A compositionally biased stretch (basic and acidic residues) spans 661 to 673 (AKEEREEPENARP).

In terms of biological role, inactive polyglycylase. This is Inactive polyglycylase TTLL10 from Homo sapiens (Human).